A 157-amino-acid chain; its full sequence is Transcription elongation factor GreA (157 aa).

A coiled-coil region spans residues 13–75 (RARLEAELEE…EIKSILARAQ (63 aa)). Residues 113 to 142 (EAKPSEGKISNESPIGSALLGKRPRQKVTV) form a disordered region.

This sequence belongs to the GreA/GreB family.

In terms of biological role, necessary for efficient RNA polymerase transcription elongation past template-encoded arresting sites. The arresting sites in DNA have the property of trapping a certain fraction of elongating RNA polymerases that pass through, resulting in locked ternary complexes. Cleavage of the nascent transcript by cleavage factors such as GreA or GreB allows the resumption of elongation from the new 3'terminus. GreA releases sequences of 2 to 3 nucleotides. The chain is Transcription elongation factor GreA from Roseiflexus sp. (strain RS-1).